The following is a 147-amino-acid chain: Methylmalonyl-CoA mutase homolog (147 aa).

This sequence to methylmalonyl-CoA mutase.

The protein is Methylmalonyl-CoA mutase homolog of Alkalihalophilus pseudofirmus (strain ATCC BAA-2126 / JCM 17055 / OF4) (Bacillus pseudofirmus).